The chain runs to 304 residues: MFGRVAVLLGGTSAEREVSLLSGRNVLEVLRMRGVDAQSVDGVPALAQALVERRFDRVFNVLHGHNGGGEDGVVQGLMQAFGVPYTGSDVLGSALSMDKVRTKQVWLALGLPTPRYASLSVCATAVEVRKAVEMLGFPVIIKPAKEGSSVGVSRVFALEHLEEAVALAARYEGELLMEQLIEGDELTVSILDEMALPSIRIVPQGQWYDYNAKYLAEDTQYVCPGLDDVAEAEIAQLALAAFHSVGCRGWGRVDVMRERGSGRFFLLEVNTAPGMTTHSLVPKAASQLGMGFDDLVWRILEQTL.

Residues 103 to 301 (KQVWLALGLP…FDDLVWRILE (199 aa)) enclose the ATP-grasp domain. ATP is bound at residue 132-187 (VEMLGFPVIIKPAKEGSSVGVSRVFALEHLEEAVALAARYEGELLMEQLIEGDELT). Positions 254, 268, and 270 each coordinate Mg(2+).

Belongs to the D-alanine--D-alanine ligase family. Mg(2+) is required as a cofactor. It depends on Mn(2+) as a cofactor.

It is found in the cytoplasm. The catalysed reaction is 2 D-alanine + ATP = D-alanyl-D-alanine + ADP + phosphate + H(+). The protein operates within cell wall biogenesis; peptidoglycan biosynthesis. In terms of biological role, cell wall formation. This is D-alanine--D-alanine ligase from Xylella fastidiosa (strain Temecula1 / ATCC 700964).